The following is a 196-amino-acid chain: Calcineurin B homologous protein 2 (196 aa).

The N-myristoyl glycine moiety is linked to residue Gly2. EF-hand domains follow at residues 26-61, 71-106, 111-146, and 152-187; these read ASLL…AVNP, FPDG…PKKP, SRRN…MVGV, and QLEN…MDVE. Phosphoserine is present on Ser27. Positions 124, 126, 128, 130, and 135 each coordinate Ca(2+). Residues 137–148 carry the Nuclear export signal motif; that stretch reads LQVLRLMVGVQV. Ca(2+) contacts are provided by Asp165, Asp167, Asp169, and Glu176.

This sequence belongs to the calcineurin regulatory subunit family. CHP subfamily. Interacts with PPP3CA. Interacts with SLC9A1/NHE1; the interaction occurs in a calcium-dependent manner. In terms of tissue distribution, expressed in malignantly transformed cells but not detected in normal tissues.

It is found in the nucleus. It localises to the cytoplasm. The protein resides in the cell membrane. Its function is as follows. Functions as an integral cofactor in cell pH regulation by controlling plasma membrane-type Na(+)/H(+) exchange activity. Binds to and activates SLC9A1/NHE1 in a serum-independent manner, thus increasing pH and protecting cells from serum deprivation-induced death. Also plays a role in the regulation of cell proliferation and tumor growth by increasing the phosphatase activity of PPP3CA in a calcium-dependent manner. Activator of the calcineurin/NFAT signaling pathway. Involved in the cytoplasmic translocation of the transcription factor NFATC3 to the nucleus. The polypeptide is Calcineurin B homologous protein 2 (CHP2) (Homo sapiens (Human)).